Reading from the N-terminus, the 335-residue chain is Serpentine receptor class alpha-13 (335 aa).

Residues 1-22 lie on the Extracellular side of the membrane; it reads MAIVSSENRTCADEKLLALYQS. The chain crosses the membrane as a helical span at residues 23 to 43; that stretch reads WSYIASIVFNCLVPTISTYFL. Topologically, residues 44 to 61 are cytoplasmic; it reads GRAIFQLCNQATIQYSTR. Residues 62–82 traverse the membrane as a helical segment; the sequence is ILLIATILFAACHQVSYFAFK. At 83–107 the chain is on the extracellular side; that stretch reads IDLLHTMFFKLDQPCFLQRSSYDCR. Residues 108–128 form a helical membrane-spanning segment; that stretch reads FISIAQTTGVVGMALTGLAMS. Over 129 to 149 the chain is Cytoplasmic; it reads TDRALALTFPADYHKLKSVPR. Residues 150-170 traverse the membrane as a helical segment; sequence VVLSVFVFIVSFSTWFLLTMN. At 171-192 the chain is on the extracellular side; it reads DPLTGYLNHCGFYPSYSVANFQ. Residues 193–213 form a helical membrane-spanning segment; that stretch reads LMLDVILYLAIFNLIWDVILF. The Cytoplasmic segment spans residues 214–235; sequence YYARQQILWRRSYQFQKRYEAR. A helical membrane pass occupies residues 236 to 255; the sequence is ISLNCTQAVFVISICQCISN. Residues 256–278 lie on the Extracellular side of the membrane; the sequence is GANSGLMRLLMMIGTSITSVTYS. A helical transmembrane segment spans residues 279-299; sequence SLLSLFYTAPYSCILLPILMM. Over 300–335 the chain is Cytoplasmic; the sequence is RISEYIREQRTIGILSLRSEKPGLEEHHQRMRAAWS.

The protein belongs to the nematode receptor-like protein sra family.

The protein localises to the membrane. Chemosensory receptor that negatively regulates RAS/MAPK signaling during vulva induction and the negative regulation of olfaction of volitile attractants. Required for the suppression of vulval induction in response to food starvation. Signaling acts through the GPA-5 G-alpha protein subunit. The chain is Serpentine receptor class alpha-13 from Caenorhabditis briggsae.